Here is a 119-residue protein sequence, read N- to C-terminus: Large ribosomal subunit protein bL20c (119 aa).

It belongs to the bacterial ribosomal protein bL20 family.

It localises to the plastid. The protein localises to the chloroplast. Its function is as follows. Binds directly to 23S ribosomal RNA and is necessary for the in vitro assembly process of the 50S ribosomal subunit. It is not involved in the protein synthesizing functions of that subunit. The polypeptide is Large ribosomal subunit protein bL20c (Saccharum officinarum (Sugarcane)).